The chain runs to 125 residues: MALKDTAKKMTDLLESIQQNLLKAEKGNKAAAQRVRTESIKLEKTAKVYRKESIKAEKMGLMKKSKAAAKKAKAAAKKPVRATKTVAKKACTKRTCATKAKVKPTKKAAPKTKVKTAKKTRSTKK.

Residues 98–125 form a disordered region; the sequence is TKAKVKPTKKAAPKTKVKTAKKTRSTKK. The segment covering 100–125 has biased composition (basic residues); sequence AKVKPTKKAAPKTKVKTAKKTRSTKK.

The protein belongs to the histone H1/H5 family. HCT subfamily.

Functionally, might have a role analogous to that of eukaryotic histone proteins. This Chlamydia trachomatis serovar L2 (strain ATCC VR-902B / DSM 19102 / 434/Bu) protein is Histone H1-like protein Hc1 (hctA).